The sequence spans 108 residues: Guanine nucleotide-binding protein subunit gamma (108 aa).

A lipid anchor (S-palmitoyl cysteine) is attached at C104. C105 carries the cysteine methyl ester modification. C105 is lipidated: S-farnesyl cysteine. Positions 106 to 108 are cleaved as a propeptide — removed in mature form; sequence VIS.

The protein belongs to the G protein gamma family. G proteins are composed of 3 units, alpha, beta and gamma.

The protein localises to the membrane. The sequence is that of Guanine nucleotide-binding protein subunit gamma from Yarrowia lipolytica (strain CLIB 122 / E 150) (Yeast).